Here is a 496-residue protein sequence, read N- to C-terminus: Glutamate--tRNA ligase (496 aa).

The 'HIGH' region motif lies at 10–20; it reads PSPTGPLHIGG. Positions 251-255 match the 'KMSKS' region motif; it reads KMSKR. Lys-254 contributes to the ATP binding site.

Belongs to the class-I aminoacyl-tRNA synthetase family. Glutamate--tRNA ligase type 1 subfamily. Monomer.

The protein localises to the cytoplasm. It carries out the reaction tRNA(Glu) + L-glutamate + ATP = L-glutamyl-tRNA(Glu) + AMP + diphosphate. In terms of biological role, catalyzes the attachment of glutamate to tRNA(Glu) in a two-step reaction: glutamate is first activated by ATP to form Glu-AMP and then transferred to the acceptor end of tRNA(Glu). The sequence is that of Glutamate--tRNA ligase from Heliobacterium modesticaldum (strain ATCC 51547 / Ice1).